The chain runs to 447 residues: Alpha-1,3-mannosyl-glycoprotein 2-beta-N-acetylglucosaminyltransferase (447 aa).

The Cytoplasmic segment spans residues 1–6 (MLKKQS). The chain crosses the membrane as a helical; Signal-anchor for type II membrane protein span at residues 7–29 (AGLVLWGAILFVAWNALLLLFFW). Topologically, residues 30-447 (TRPVPSRLPS…TWDGYDPSWT (418 aa)) are lumenal. Residues Cys115 and Cys145 are joined by a disulfide bond. Substrate-binding residues include Arg117, Asp144, His190, and Asp212. Residue Asp213 coordinates Mn(2+). Cys239 and Cys305 are disulfide-bonded. Asp291 functions as the Proton acceptor in the catalytic mechanism. A substrate-binding site is contributed by Ser322.

It belongs to the glycosyltransferase 13 family. Interacts with MGAT4D. Interacts with BRI3. The cofactor is Mn(2+).

The protein localises to the golgi apparatus membrane. Its subcellular location is the cytoplasm. The protein resides in the perinuclear region. The enzyme catalyses N(4)-(alpha-D-Man-(1-&gt;3)-[alpha-D-Man-(1-&gt;3)-[alpha-D-Man-(1-&gt;6)]-alpha-D-Man-(1-&gt;6)]-beta-D-Man-(1-&gt;4)-beta-D-GlcNAc-(1-&gt;4)-beta-D-GlcNAc)-L-asparaginyl-[protein] (N-glucan mannose isomer 5A1,2) + UDP-N-acetyl-alpha-D-glucosamine = N(4)-{beta-D-GlcNAc-(1-&gt;2)-alpha-D-Man-(1-&gt;3)-[alpha-D-Man-(1-&gt;3)-[alpha-D-Man-(1-&gt;6)]-alpha-D-Man-(1-&gt;6)]-beta-D-Man-(1-&gt;4)-beta-D-GlcNAc-(1-&gt;4)-beta-D-GlcNAc}-L-asparaginyl-[protein] + UDP + H(+). It participates in protein modification; protein glycosylation. Its function is as follows. Initiates complex N-linked carbohydrate formation. Essential for the conversion of high-mannose to hybrid and complex N-glycans. The chain is Alpha-1,3-mannosyl-glycoprotein 2-beta-N-acetylglucosaminyltransferase (MGAT1) from Oryctolagus cuniculus (Rabbit).